The chain runs to 218 residues: Guanylate kinase (218 aa).

Residues 17–196 (GVLLALSSPS…ALEKLNEILH (180 aa)) enclose the Guanylate kinase-like domain. 24-31 (SPSGAGKT) contacts ATP.

Belongs to the guanylate kinase family.

It is found in the cytoplasm. It catalyses the reaction GMP + ATP = GDP + ADP. Its function is as follows. Essential for recycling GMP and indirectly, cGMP. The chain is Guanylate kinase from Maricaulis maris (strain MCS10) (Caulobacter maris).